Here is a 1761-residue protein sequence, read N- to C-terminus: MSRHQAVLQLHFFASILETLLKDVNHPLSHFDKVSEDELDELWSWNTPLQPELRFCMHEKVSERAALHPEKIAIDAWDGTLTYGQIEDYSDKLAKLLRLLDDSSNRIIPVLFEKSRWTSVAVLAIMKSGACFALLDPAQPEGRLRAVVQQVNAKIFLSSKAQSTLAARVAPAATIIPISKSKFNKIFSPYTAEQPNTTLPPVSPDQPLYIQFTSGSTGVPKGCILTHSQYTSGAIPRAAAVGYYPHSRVLDFASYAFDVCIDSMLCTLAHGATLCTPSDERRMNDMSGAMRDMRVTFAGMTPSVARTLDVDILNNLESIALGGEGVSISDAMSWGQRTRVVNAYGPSEATVGATINDNVAAKPYITMGQRKGCALWLTEPEDHNKLVPVGAVGELLIEGPIVGNGYLNNPSKTKEVFIEDPEFLIKGSKSYPGRHGRIYKTGDLVRFDPDGDGEPIFVGRQDQQVKLRGQRIELAEIEFNMQKHLPPDTQLAAEVIKPSGGGEQTLVAFLVEQKKNGMRHLDGNVFGSFTNKFQSALRDMTKQLFVDLPSYMVPSAYIPLWKMPLLVSCKTDRKRLREIGASVTRQDLRRFNSAVSEKKEATTEMELKLQSLWAKVLGGDADFSANDNFFSMGGDSLRAMRLVAAARDEAIVLSVPDIMLNPTLSAMAEKAKPVSAEETNEVPPFSMIGKDWDADAARRESARLCGVDAANVEDVYPCTPLQEGLIALSAKFQDAYVAQRVATLPAKTALRLKEAFDTAVEGSPVLRTRIVNVTGRGLFQVVLKDGQLVREHGTDTSEYLRRDRNEPMDLGTALFRYGLVKEPESDQMNFVITMHHAVYDGWSMPLVFDHVNSAFNGLHTERPTSFKHFIKHLTSLDPADAQQYWKKRLEGTSPHQFPPLPQKGYTTQADSLLEHYVTVPTSAHSKLTLATIIRGAWALVSSLYIGHPDIVFGETLTGRSAPVPGIEQIEGPMITTVPIRVRLSLDRPITEYLQMIHAVTVKQIPHEHLGLQNIRRLSKDARVACDLRTGLVLHPKEDEDWGKVSLETPANTFLPASDEEGAREALKFNTYALMLVCTLEENGFLVMASFDSNCISKEAMERVLVVLDRIVHAFLGNPESKLGDVAVLDPAEARDAEAMRPRDVMSDSALGMSPVDGLESMDASLKELSPNEEKLRNILGRILGMKETDIRPSDSFFDLGGDSIGAMRLVSDARAQGLNLTVAQVFQSRSLSDLAASASNEREDKLAEILSRILGIAKSDIKSSDSFFELGGDSIGAMRLVSDARAQGLSITVAQVFQSKSLAELASSAEEEMPSQPKTNVDAPFIALGKDANLHSPDRVGVYLENQEWEITNIYPTRPLQQLAVEGTVDLPRYSLRYELIKFATPIDRQKLEQACQELVARNEVLRTVFVKDNELTLGVVLSALRVPYTETAVPEGEDADAFIQAGIKQDIEAPKPYGSSFVAFNLFTHPNGASTLVFRISHAQYDEICLPILFEQLSALYSGTTVPETVPFSKHVNHVVLDNIPKAIPYWENLLSGSEMTVLKPTIPLTHRGPADIYREFDISSRPANITIGSLPTAAWALVLSRRLNLTDVVFGEVVSGRNVGAPNADRIFGPTWQYIPFRVPFSKSWSYLDLLRYVQDQHMTSAAYESMGFSEIVKNCTNWDEDKVQWFDTVVHQAPAWVEELPFGNGVEAKFQTLYPHGEPLREWKCQAFVKEGGRKLGIEIVTFEEWIGEAEGVLEEVGKALECLMEGRVGESIF.

The adenylation stretch occupies residues Glu63 to Arg468. Residues Glu600–Ser675 enclose the Carrier 1 domain. At Ser636 the chain carries O-(pantetheine 4'-phosphoryl)serine. Positions Val712–Asp1135 are condensation 1. Carrier domains lie at Ser1169–Arg1242 and Ser1237–Met1313. O-(pantetheine 4'-phosphoryl)serine is present on residues Ser1203 and Ser1274. The tract at residues Ile1354–Val1677 is condensation 2.

The protein belongs to the NRP synthetase family.

The protein operates within siderophore biosynthesis. NRPS involved in extracellular coprogen-type siderophores biosynthesis including coprogen, neocoprogen I and neocoprogen II. The role of extracellular siderophores in fungal virulence to plants is to supply iron to the fungus during plant infection, but not to act as phytotoxins, depriving their hosts of iron. The protein is Nonribosomal peptide synthetase 6 of Cochliobolus miyabeanus (Brown spot disease fungus).